A 174-amino-acid polypeptide reads, in one-letter code: Small ribosomal subunit protein uS7c (174 aa).

It belongs to the universal ribosomal protein uS7 family. In terms of assembly, part of the 30S ribosomal subunit.

It is found in the plastid. The protein resides in the chloroplast. Functionally, one of the primary rRNA binding proteins, it binds directly to 16S rRNA where it nucleates assembly of the head domain of the 30S subunit. The sequence is that of Small ribosomal subunit protein uS7c (rps7) from Stigeoclonium helveticum (Green alga).